Here is a 240-residue protein sequence, read N- to C-terminus: Orotidine 5'-phosphate decarboxylase (240 aa).

Residues Asp-10, Lys-32, 59-68, Thr-122, Arg-183, Gln-192, Gly-212, and Arg-213 each bind substrate; that span reads DLKLHDIPNT. Catalysis depends on Lys-61, which acts as the Proton donor.

The protein belongs to the OMP decarboxylase family. Type 1 subfamily. In terms of assembly, homodimer.

It carries out the reaction orotidine 5'-phosphate + H(+) = UMP + CO2. It functions in the pathway pyrimidine metabolism; UMP biosynthesis via de novo pathway; UMP from orotate: step 2/2. Catalyzes the decarboxylation of orotidine 5'-monophosphate (OMP) to uridine 5'-monophosphate (UMP). This Carboxydothermus hydrogenoformans (strain ATCC BAA-161 / DSM 6008 / Z-2901) protein is Orotidine 5'-phosphate decarboxylase.